Consider the following 241-residue polypeptide: Demethylmenaquinone methyltransferase (241 aa).

S-adenosyl-L-methionine contacts are provided by residues Thr60, Asp81, and 106–107 (DA).

It belongs to the class I-like SAM-binding methyltransferase superfamily. MenG/UbiE family.

The enzyme catalyses a 2-demethylmenaquinol + S-adenosyl-L-methionine = a menaquinol + S-adenosyl-L-homocysteine + H(+). It participates in quinol/quinone metabolism; menaquinone biosynthesis; menaquinol from 1,4-dihydroxy-2-naphthoate: step 2/2. Functionally, methyltransferase required for the conversion of demethylmenaquinol (DMKH2) to menaquinol (MKH2). The protein is Demethylmenaquinone methyltransferase of Staphylococcus aureus (strain MRSA252).